The following is a 157-amino-acid chain: Large ribosomal subunit protein uL13m (157 aa).

The transit peptide at 1–29 (MSTLNGQTALAYAKVWHHVSAKNVPLGRL) directs the protein to the mitochondrion.

This sequence belongs to the universal ribosomal protein uL13 family. Component of the mitochondrial large ribosomal subunit (mt-LSU). Mature yeast 74S mitochondrial ribosomes consist of a small (37S) and a large (54S) subunit. The 37S small subunit contains a 15S ribosomal RNA (15S mt-rRNA) and at least 32 different proteins. The 54S large subunit contains a 21S rRNA (21S mt-rRNA) and at least 45 different proteins.

It is found in the mitochondrion. Component of the mitochondrial ribosome (mitoribosome), a dedicated translation machinery responsible for the synthesis of mitochondrial genome-encoded proteins, including at least some of the essential transmembrane subunits of the mitochondrial respiratory chain. The mitoribosomes are attached to the mitochondrial inner membrane and translation products are cotranslationally integrated into the membrane. This Schizosaccharomyces pombe (strain 972 / ATCC 24843) (Fission yeast) protein is Large ribosomal subunit protein uL13m.